Reading from the N-terminus, the 312-residue chain is DNA-directed RNA polymerase subunit alpha (312 aa).

Positions 1–226 (MIEFEKPNIT…EHFKVFESAD (226 aa)) are alpha N-terminal domain (alpha-NTD). The alpha C-terminal domain (alpha-CTD) stretch occupies residues 243–312 (KEKKLEMTIE…DLGLSLRQED (70 aa)).

It belongs to the RNA polymerase alpha chain family. As to quaternary structure, homodimer. The RNAP catalytic core consists of 2 alpha, 1 beta, 1 beta' and 1 omega subunit. When a sigma factor is associated with the core the holoenzyme is formed, which can initiate transcription.

The enzyme catalyses RNA(n) + a ribonucleoside 5'-triphosphate = RNA(n+1) + diphosphate. Its function is as follows. DNA-dependent RNA polymerase catalyzes the transcription of DNA into RNA using the four ribonucleoside triphosphates as substrates. This is DNA-directed RNA polymerase subunit alpha from Lactobacillus acidophilus (strain ATCC 700396 / NCK56 / N2 / NCFM).